A 264-amino-acid polypeptide reads, in one-letter code: Glutamate racemase (264 aa).

Residues 10 to 11 and 42 to 43 each bind substrate; these read DS and YG. Catalysis depends on C73, which acts as the Proton donor/acceptor. 74 to 75 serves as a coordination point for substrate; it reads NT. C183 (proton donor/acceptor) is an active-site residue. Residue 184-185 participates in substrate binding; the sequence is TH.

Belongs to the aspartate/glutamate racemases family.

It carries out the reaction L-glutamate = D-glutamate. Its pathway is cell wall biogenesis; peptidoglycan biosynthesis. Its function is as follows. Provides the (R)-glutamate required for cell wall biosynthesis. The chain is Glutamate racemase from Streptococcus gordonii (strain Challis / ATCC 35105 / BCRC 15272 / CH1 / DL1 / V288).